We begin with the raw amino-acid sequence, 918 residues long: E3 ubiquitin-protein ligase CBL-B-A (918 aa).

Low complexity predominate over residues 1-18; that stretch reads MASGSGSSSSTSSSALSG. Positions 1-27 are disordered; it reads MASGSGSSSSTSSSALSGRLPGSRSAN. A 4H region spans residues 46-178; it reads PPKQAAADRR…KAIFPSGQFQ (133 aa). In terms of domain architecture, Cbl-PTB spans 46–354; the sequence is PPKQAAADRR…GRSYNPDLTG (309 aa). The interval 179–251 is EF-hand-like; it reads GDNFRITKAD…FEFDIFTRLF (73 aa). The Ca(2+) site is built by Asp-232, Thr-234, Asn-236, Tyr-238, and Glu-243. An SH2-like region spans residues 252 to 354; sequence QPWGSILRNW…GRSYNPDLTG (103 aa). Arg-297 provides a ligand contact to 4-O-phospho-L-tyrosine. A linker region spans residues 355–383; it reads LCEPTPHDHIKVTQEQYELYCEMGSTFQL. The RING-type zinc finger occupies 384-423; sequence CKICAENDKDVKIEPCGHLMCTSCLTSWQESDGQGCPFCR. 3 disordered regions span residues 481–582, 780–831, and 857–918; these read NERQ…RTCR, FPPA…PPAR, and HSDP…MRPT. Residues 483-497 show a composition bias toward polar residues; it reads RQNSPVTSPGSSPLS. Pro residues-rich tracts occupy residues 554-576 and 821-830; these read LPAPPPLLREPPPPPERPPPIPP and PSQPPPPPPA. Positions 898 to 918 are enriched in polar residues; it reads KASNTKGELLLPNQNLIMRPT.

Interacts with several SH3 domain-containing proteins and with poly-ubiquitinated proteins.

It is found in the cytoplasm. The catalysed reaction is S-ubiquitinyl-[E2 ubiquitin-conjugating enzyme]-L-cysteine + [acceptor protein]-L-lysine = [E2 ubiquitin-conjugating enzyme]-L-cysteine + N(6)-ubiquitinyl-[acceptor protein]-L-lysine.. The protein operates within protein modification; protein ubiquitination. Its function is as follows. E3 ubiquitin-protein ligase which accepts ubiquitin from specific E2 ubiquitin-conjugating enzymes, and transfers it to substrates, generally promoting their degradation by the proteasome. This chain is E3 ubiquitin-protein ligase CBL-B-A (cblb-a), found in Xenopus laevis (African clawed frog).